A 411-amino-acid chain; its full sequence is Class E basic helix-loop-helix protein 40 (411 aa).

Positions 1-20 (MERIPSAQPPPTCLPKAPGL) are disordered. The interval 1 to 139 (MERIPSAQPP…LSGRNLEAGQ (139 aa)) is essential for interaction with BMAL1, E-box binding and repressor activity against the CLOCK-BMAL1 heterodimer. Residues 52-107 (TYKLPHRLIEKKRRDRINECIAQLKDLLPEHLKLTTLGHLEKAVVLELTLKHVKAL) form the bHLH domain. Residues 75–79 (LKDLL) are necessary for interaction with RXRA and repressor activity against RXRA. Positions 142 to 175 (FCSGFQTCAREVLQYLAKHENTRDLKSSQLVTHL) constitute an Orange domain. K159 is covalently cross-linked (Glycyl lysine isopeptide (Lys-Gly) (interchain with G-Cter in SUMO1, SUMO2 and SUMO3)). A Glycyl lysine isopeptide (Lys-Gly) (interchain with G-Cter in SUMO2) cross-link involves residue K167. Residues 227-294 (FAPSGGEQSG…PPTKKSRMQL (68 aa)) form a disordered region. Position 235 is a phosphoserine (S235). A compositionally biased stretch (basic and acidic residues) spans 248-271 (ELEKGDLRSEQPYFKSDHGRRFAV). K279 is covalently cross-linked (Glycyl lysine isopeptide (Lys-Gly) (interchain with G-Cter in SUMO1); alternate). K279 participates in a covalent cross-link: Glycyl lysine isopeptide (Lys-Gly) (interchain with G-Cter in SUMO1, SUMO2 and SUMO3); alternate. Residue K279 forms a Glycyl lysine isopeptide (Lys-Gly) (interchain with G-Cter in SUMO2); alternate linkage. K288 is covalently cross-linked (Glycyl lysine isopeptide (Lys-Gly) (interchain with G-Cter in SUMO2)). Residue S383 is modified to Phosphoserine.

As to quaternary structure, homodimer. Heterodimer with BHLHE41/DEC2. Interacts with ubiquitin-conjugating enzyme UBE2I/UBC9. Interacts with HDAC1, SUMO1, RXRA and BMAL1. Interacts with TCF3/E47. Post-translationally, ubiquitinated; which may lead to proteasomal degradation. In terms of processing, sumoylation inhibits its ubiquitination and promotes its negative regulation of the CLOCK-BMAL1 heterodimer transcriptional activator activity.

It localises to the cytoplasm. The protein localises to the nucleus. Transcriptional repressor involved in the regulation of the circadian rhythm by negatively regulating the activity of the clock genes and clock-controlled genes. Acts as the negative limb of a novel autoregulatory feedback loop (DEC loop) which differs from the one formed by the PER and CRY transcriptional repressors (PER/CRY loop). Both these loops are interlocked as it represses the expression of PER1/2 and in turn is repressed by PER1/2 and CRY1/2. Represses the activity of the circadian transcriptional activator: CLOCK-BMAL1|BMAL2 heterodimer by competing for the binding to E-box elements (5'-CACGTG-3') found within the promoters of its target genes. Negatively regulates its own expression and the expression of DBP and BHLHE41/DEC2. Acts as a corepressor of RXR and the RXR-LXR heterodimers and represses the ligand-induced RXRA and NR1H3/LXRA transactivation activity. May function as a transcriptional factor for neuronal differentiation. Represses the transcription of NR0B2 and attentuates the transactivation of NR0B2 by the CLOCK-BMAL1 complex. Drives the circadian rhythm of blood pressure through transcriptional repression of ATP1B1 in the cardiovascular system. The protein is Class E basic helix-loop-helix protein 40 (Bhlhe40) of Mus musculus (Mouse).